We begin with the raw amino-acid sequence, 327 residues long: Aldo-keto reductase family 1 member A1 (327 aa).

NADP(+)-binding positions include 13–22 (GQKIPLIGLG), Thr23, Trp24, and Asp47. The active-site Proton donor is the Tyr52. 12 residues coordinate NADP(+): Ser164, Asn165, Ser213, Leu215, Ser217, Lys265, Ser266, Val267, Thr268, Arg271, Gln274, and Asn275.

The protein belongs to the aldo/keto reductase family.

It localises to the cytoplasm. Its subcellular location is the cytosol. It is found in the apical cell membrane. It catalyses the reaction a primary alcohol + NADP(+) = an aldehyde + NADPH + H(+). It carries out the reaction S-nitroso-CoA + NADPH + H(+) = sulfinamide-CoA + NADP(+). The catalysed reaction is S-nitrosoglutathione + NADPH + H(+) = S-(hydroxysulfenamide)glutathione + NADP(+). Functionally, catalyzes the NADPH-dependent reduction of a wide variety of carbonyl-containing compounds to their corresponding alcohols. Displays enzymatic activity towards endogenous metabolites such as aromatic and aliphatic aldehydes, ketones, monosaccharides and bile acids. Acts as an aldehyde-detoxification enzyme. Also acts as an inhibitor of protein S-nitrosylation by mediating degradation of S-nitroso-coenzyme A (S-nitroso-CoA), a cofactor required to S-nitrosylate proteins. Also acts as a S-nitroso-glutathione reductase by catalyzing the NADPH-dependent reduction of S-nitrosoglutathione. Displays no reductase activity towards retinoids. The protein is Aldo-keto reductase family 1 member A1 (akr1a1) of Xenopus tropicalis (Western clawed frog).